A 294-amino-acid polypeptide reads, in one-letter code: MTPSRRLLLVHAHPDDETINNGATMARYVAEGAQVTLLTCTLGEEGEVLVPELELLAAEHADQLGGYRIGELRAAMEALGVADWRFLGGPGRYRDSGMMGTPANDEPRAFWNADLDEAVAHAVAVVREVRPQVVVTYDENGGYGHPDHIQAHRVAMRAVDAAADPAYRPDLGGAWEVAKVYWCCVPRSVLRQGIEALAALGEESPFASLDDVDDLPFAVPDELVAAAVDGRAHARRKDAAMRAHATQITVDGPFFALSNNLGQEVLGTEYYRLVRGERGTADGWEDDLFAGLPG.

Zn(2+) is bound by residues His-13, Asp-16, and His-148.

This sequence belongs to the MshB deacetylase family. It depends on Zn(2+) as a cofactor.

The catalysed reaction is 1D-myo-inositol 2-acetamido-2-deoxy-alpha-D-glucopyranoside + H2O = 1D-myo-inositol 2-amino-2-deoxy-alpha-D-glucopyranoside + acetate. In terms of biological role, catalyzes the deacetylation of 1D-myo-inositol 2-acetamido-2-deoxy-alpha-D-glucopyranoside (GlcNAc-Ins) in the mycothiol biosynthesis pathway. The polypeptide is 1D-myo-inositol 2-acetamido-2-deoxy-alpha-D-glucopyranoside deacetylase (Geodermatophilus obscurus (strain ATCC 25078 / DSM 43160 / JCM 3152 / CCUG 61914 / KCC A-0152 / KCTC 9177 / NBRC 13315 / NRRL B-3577 / G-20)).